Here is a 155-residue protein sequence, read N- to C-terminus: Nucleosome assembly protein 1-like 5 (155 aa).

The segment covering 1–16 (MADPEKQGPAESRAED) has biased composition (basic and acidic residues). The segment at 1–60 (MADPEKQGPAESRAEDEVMEGAQGGEDAATGDSATAPAAEEPQAPAENAPKPKNDFIESL) is disordered. Residues 27–49 (DAATGDSATAPAAEEPQAPAENA) show a composition bias toward low complexity. Residues 68 to 94 (VLALKKLQKRCDKIEAKFDKEFQALEK) adopt a coiled-coil conformation. Positions 119–155 (WTLEGEDDEDDEEEEDEEEEEEEAAAGATGGPDSAEK) are disordered. Positions 122–142 (EGEDDEDDEEEEDEEEEEEEA) are enriched in acidic residues.

The protein belongs to the nucleosome assembly protein (NAP) family.

The protein localises to the nucleus. The protein is Nucleosome assembly protein 1-like 5 (Nap1l5) of Rattus norvegicus (Rat).